A 144-amino-acid chain; its full sequence is Eukaryotic translation initiation factor 1A, Y-chromosomal (144 aa).

Positions 1 to 15 (MPKNKGKGGKNRRRG) are enriched in basic residues. Residues 1-26 (MPKNKGKGGKNRRRGKNENESEKREL) are disordered. The span at 16–26 (KNENESEKREL) shows a compositional bias: basic and acidic residues. In terms of domain architecture, S1-like spans 22–96 (EKRELVFKED…NKADVILKYN (75 aa)). Residue Lys-88 forms a Glycyl lysine isopeptide (Lys-Gly) (interchain with G-Cter in ubiquitin) linkage. The tract at residues 114–144 (KINETDTFGPGDDDEVQFDDIGDDDEDIDDI) is disordered. Over residues 124 to 144 (GDDDEVQFDDIGDDDEDIDDI) the composition is skewed to acidic residues.

Belongs to the eIF-1A family. In terms of assembly, component of the 43S pre-initiation complex (43S PIC), which is composed of the 40S ribosomal subunit, EIF1, eIF1A (EIF1AX), eIF3 complex, EIF5 and eIF2-GTP-initiator tRNA complex (eIF2 ternary complex). Interacts with EIF5; this interaction contributes to the maintenance of EIF1 within the open 43S PIC. Interacts through its C-terminal domain (CTD) with the CTD of EIF5B; from the location of the start codon by the 43S complex until the formation of the 80S complex. In terms of tissue distribution, ubiquitous.

The protein resides in the cytoplasm. In terms of biological role, component of the 43S pre-initiation complex (43S PIC), which binds to the mRNA cap-proximal region, scans mRNA 5'-untranslated region, and locates the initiation codon. This protein enhances formation of the cap-proximal complex. Together with EIF1, facilitates scanning, start codon recognition, promotion of the assembly of 48S complex at the initiation codon (43S PIC becomes 48S PIC after the start codon is reached), and dissociation of aberrant complexes. After start codon location, together with EIF5B orients the initiator methionine-tRNA in a conformation that allows 60S ribosomal subunit joining to form the 80S initiation complex. Is released after 80S initiation complex formation, just after GTP hydrolysis by EIF5B, and before release of EIF5B. Its globular part is located in the A site of the 40S ribosomal subunit. Its interaction with EIF5 during scanning contribute to the maintenance of EIF1 within the open 43S PIC. In contrast to yeast orthologs, does not bind EIF1. The chain is Eukaryotic translation initiation factor 1A, Y-chromosomal (EIF1AY) from Pan troglodytes (Chimpanzee).